Reading from the N-terminus, the 298-residue chain is UDP-3-O-acyl-N-acetylglucosamine deacetylase (298 aa).

3 residues coordinate Zn(2+): H75, H232, and D236. The active-site Proton donor is the H259.

The protein belongs to the LpxC family. Requires Zn(2+) as cofactor.

The catalysed reaction is a UDP-3-O-[(3R)-3-hydroxyacyl]-N-acetyl-alpha-D-glucosamine + H2O = a UDP-3-O-[(3R)-3-hydroxyacyl]-alpha-D-glucosamine + acetate. It functions in the pathway glycolipid biosynthesis; lipid IV(A) biosynthesis; lipid IV(A) from (3R)-3-hydroxytetradecanoyl-[acyl-carrier-protein] and UDP-N-acetyl-alpha-D-glucosamine: step 2/6. Its function is as follows. Catalyzes the hydrolysis of UDP-3-O-myristoyl-N-acetylglucosamine to form UDP-3-O-myristoylglucosamine and acetate, the committed step in lipid A biosynthesis. The chain is UDP-3-O-acyl-N-acetylglucosamine deacetylase from Wolinella succinogenes (strain ATCC 29543 / DSM 1740 / CCUG 13145 / JCM 31913 / LMG 7466 / NCTC 11488 / FDC 602W) (Vibrio succinogenes).